A 109-amino-acid chain; its full sequence is Protein ELF4-LIKE 3 (109 aa).

Residues Ser-88–Ala-109 are disordered.

This sequence belongs to the EARLY FLOWERING 4 family. Homodimer.

Its subcellular location is the nucleus. In terms of biological role, component of the central CCA1/LHY-TOC1 feedback loop in the circadian clock that promotes clock accuracy and is required for sustained rhythms in the absence of daily light/dark cycles. This chain is Protein ELF4-LIKE 3 (EFL3), found in Arabidopsis thaliana (Mouse-ear cress).